Consider the following 746-residue polypeptide: Transcription factor pbcR (746 aa).

The span at 1–12 (MYPWSSTGTSPF) shows a compositional bias: polar residues. The segment at 1-40 (MYPWSSTGTSPFSHPDNEGAESGDMSMGEEQQQPHQRRQK) is disordered. The zn(2)-C6 fungal-type DNA-binding region spans 47–76 (CQSCRASKVRCDQPNPGMPCLRCQKSGKPC). The segment at 109–131 (ELQDSAGDGETAHSTALRSPSQL) is disordered. Polar residues predominate over residues 120-131 (AHSTALRSPSQL).

The protein localises to the nucleus. In terms of biological role, transcription factor; part of the gene cluster that mediates the biosynthesis of the diterpene ent-pimara-8(14),15-diene (PD). Acts as a positive regulator for the cluster gene. Down-regulates the expression of the penicillin gene cluster, two putative polyketide clusters, and one putative nonribosomal peptide cluster. This is Transcription factor pbcR from Emericella nidulans (strain FGSC A4 / ATCC 38163 / CBS 112.46 / NRRL 194 / M139) (Aspergillus nidulans).